Reading from the N-terminus, the 320-residue chain is Sucrose operon repressor (320 aa).

One can recognise an HTH lacI-type domain in the interval 1–57 (MVAKLTDVAKLAGVSPTTVSRVINRKGYLSEKTITKVQAAMKTLGYKPNNLARSLQG). Residues 5–24 (LTDVAKLAGVSPTTVSRVIN) constitute a DNA-binding region (H-T-H motif).

In terms of biological role, negative regulator of scrB expression. The chain is Sucrose operon repressor (scrR) from Streptococcus mutans serotype c (strain ATCC 700610 / UA159).